A 1147-amino-acid polypeptide reads, in one-letter code: Sterol regulatory element-binding protein 1 (1147 aa).

The tract at residues 1-60 is transcriptional activation (acidic); the sequence is MDEPPFSEAALEQALGEPCDLDAALLTDIEDMLQLINNQDSDFPGLFDPPYAGSGAGGTD. Over 1-487 the chain is Cytoplasmic; sequence MDEPPFSEAA…HSRGMLDRSR (487 aa). Positions 27-35 match the 9aaTAD motif; it reads TDIEDMLQL. The segment at 39-193 is disordered; sequence QDSDFPGLFD…PLPGLPLASP (155 aa). 2 stretches are compositionally biased toward low complexity: residues 62 to 71 and 78 to 95; these read ASPDTSSPGS and TLSS…AAPS. Over residues 96 to 105 the composition is skewed to pro residues; the sequence is PLSPPQPAPT. 2 positions are modified to phosphoserine: Ser-98 and Ser-117. Over residues 170-190 the composition is skewed to low complexity; the sequence is GGFSTGSPPGNTQQPLPGLPL. Positions 234-497 are interaction with LMNA; that stretch reads QQVPVLLQPH…LALCTLVFLC (264 aa). Residues 323-373 enclose the bHLH domain; sequence EKRTAHNAIEKRYRSSINDKIIELKDLVVGTEAKLNKSAVLRKAIDYIRFL. A phosphoserine; by SIK1 mark is found at Ser-337 and Ser-338. A leucine-zipper region spans residues 373–394; sequence LQHSNQKLKQENLSLRTAVHKS. Residue Ser-396 is modified to Phosphoserine; by AMPK. Ser-402 bears the Phosphoserine; by SIK1 mark. Positions 421–479 are disordered; that stretch reads VEDTLTPPPSDAGSPFQSSPLSLGSRGSGSGGSGSDSEPDSPVFEDSKAKPEQRPSLHS. At Ser-457 the chain carries Phosphoserine. Residues 465-479 are compositionally biased toward basic and acidic residues; that stretch reads EDSKAKPEQRPSLHS. A helical membrane pass occupies residues 488–508; sequence LALCTLVFLCLSCNPLASLLG. Residues 509–547 lie on the Lumenal side of the membrane; sequence ARGLPSPSDTTSVYHSPGRNVLGTESRDGPGWAQWLLPP. Residues 548-568 form a helical membrane-spanning segment; sequence VVWLLNGLLVLVSLVLLFVYG. Residues 569 to 1147 are Cytoplasmic-facing; that stretch reads EPVTRPHSGP…LGGGTTVTSS (579 aa). Ser-1060 is subject to Phosphoserine.

It belongs to the SREBP family. Forms a tight complex with SCAP, the SCAP-SREBP complex, in the endoplasmic reticulum membrane and the Golgi apparatus. Interacts with PAQR3; the interaction anchors the SCAP-SREBP complex to the Golgi apparatus in low cholesterol conditions. In terms of assembly, efficient DNA binding of the soluble transcription factor fragment requires dimerization with another bHLH protein. Interacts with CEBPA, the interaction produces a transcriptional synergy. Interacts with LMNA. Post-translationally, processed in the Golgi apparatus, releasing the protein from the membrane. At low cholesterol the SCAP-SREBP complex is recruited into COPII vesicles for export from the endoplasmic reticulum. In the Golgi, complex SREBPs are cleaved sequentially by site-1 (MBTPS1, S1P) and site-2 (MBTPS2, S2P) protease. The first cleavage by site-1 protease occurs within the luminal loop, the second cleavage by site-2 protease occurs within the first transmembrane domain, releasing the transcription factor from the Golgi membrane. In terms of processing, phosphorylated by AMPK, leading to suppress protein processing and nuclear translocation, and repress target gene expression. Phosphorylation at Ser-402 by SIK1 represses activity possibly by inhibiting DNA-binding. SCAP-free SREBF1 is ubiquitinated by the BCR(ARMC5) complex, leading to its degradation. Post-translationally, ubiquitinated; the nuclear form has a rapid turnover and is rapidly ubiquitinated and degraded by the proteasome in the nucleus. In terms of tissue distribution, expressed in a wide variety of tissues, most abundant in liver and adrenal gland. In fetal tissues lung and liver shows highest expression. As to expression, predominates in hepatoma cell lines. Also expressed in kidney, brain, white fat, and muscle. Predominantly expressed in liver and adipose tissues. Also expressed in kidney, brain, white fat, and muscle.

It localises to the endoplasmic reticulum membrane. Its subcellular location is the golgi apparatus membrane. It is found in the cytoplasmic vesicle. The protein resides in the COPII-coated vesicle membrane. The protein localises to the nucleus. Activation by cleavage is down-regulated upon activation of SIRT3-dependent PRKAA1/AMPK-alpha signaling cascade which leads to inhibition of ATP-consuming lipogenesis to restore cellular energy balance. Its function is as follows. Precursor of the transcription factor form (Processed sterol regulatory element-binding protein 1), which is embedded in the endoplasmic reticulum membrane. Low sterol concentrations promote processing of this form, releasing the transcription factor form that translocates into the nucleus and activates transcription of genes involved in cholesterol biosynthesis and lipid homeostasis. Functionally, key transcription factor that regulates expression of genes involved in cholesterol biosynthesis and lipid homeostasis. Binds to the sterol regulatory element 1 (SRE-1) (5'-ATCACCCCAC-3'). Has dual sequence specificity binding to both an E-box motif (5'-ATCACGTGA-3') and to SRE-1 (5'-ATCACCCCAC-3'). Regulates the promoters of genes involved in cholesterol biosynthesis and the LDL receptor (LDLR) pathway of sterol regulation. In terms of biological role, isoform expressed only in select tissues, which has higher transcriptional activity compared to SREBP-1C. Able to stimulate both lipogenic and cholesterogenic gene expression. Has a role in the nutritional regulation of fatty acids and triglycerides in lipogenic organs such as the liver. Required for innate immune response in macrophages by regulating lipid metabolism. Predominant isoform expressed in most tissues, which has weaker transcriptional activity compared to isoform SREBP-1A. Primarily controls expression of lipogenic gene. Strongly activates global lipid synthesis in rapidly growing cells. Its function is as follows. The absence of Golgi proteolytic processing requirement makes this isoform constitutively active in transactivation of lipogenic gene promoters. This is Sterol regulatory element-binding protein 1 from Homo sapiens (Human).